A 615-amino-acid chain; its full sequence is Erythritol-mannosyl-transferase 1 (615 aa).

The interval 366–387 (RTPNNTGASTPTAPISSPDFEE) is disordered. Polar residues predominate over residues 367 to 380 (TPNNTGASTPTAPI).

Belongs to the UDP-glycosyltransferase family.

Its subcellular location is the vacuole membrane. It participates in secondary metabolite biosynthesis. In terms of biological role, erythritol-mannosyl-transferase; part of the gene cluster that mediates the biosynthesis of mannosylerythritol lipids (MELs), surface-active substances that enhance the availability of water-insoluble substrates. Mannosylerythritol lipid production is responsible for hemolytic activity of Ustilago maydis. Depending on the number of acetyl groups, mannosylerythritol lipids can be differentiated into MEL A (fully acetylated), MEL B and MEL C (monoacetylated at R-6 and R-4, respectively), and the fully deacetylated MEL D. The first step in the pathway is the generation of mannosylerythritol by the glycosyltransferase EMT1 which catalyzes the transfer of GDP-mannose to the C-4 atom of meso-erythritol. This reaction has to be stereospecific, since only mannosyl-D-erythritol is generated. The produced disaccharide is subsequently acylated with fatty acids of various lengths derived from the peroxisomal beta-oxidation by the peroxisomal acyltransferases MAC1 and MAC2 at positions C-2 and C-3, repectively. The existence of MEL derivatives which carry an acetyl group at C-2 implies that at least MAC1 also accepts acetyl-CoA as a donor. The final step of MEL biosynthesis is the acetylation of the fully acylated mannosylerythritol lipids catalyzed by the acetyl-CoA-dependent acetyltransferase MAT1. MAT1 displays a relaxed regioselectivity and is able to transfer acetylgroups to both positions C-4 and C-6 of the mannosyl moiety. The chain is Erythritol-mannosyl-transferase 1 from Mycosarcoma maydis (Corn smut fungus).